Consider the following 1582-residue polypeptide: Alpha-2-macroglobulin (1582 aa).

Positions 1-15 (MICLAALAVAVPARA) are cleaved as a signal peptide. Positions 1080-1083 (CAEQ) form a cross-link, isoglutamyl cysteine thioester (Cys-Gln).

The protein belongs to the protease inhibitor I39 (alpha-2-macroglobulin) family. Bacterial alpha-2-macroglobulin subfamily.

In terms of biological role, protects the bacterial cell from host peptidases. This is Alpha-2-macroglobulin from Ralstonia nicotianae (strain ATCC BAA-1114 / GMI1000) (Ralstonia solanacearum).